A 351-amino-acid chain; its full sequence is Hydroxymethylglutaryl-CoA synthase (351 aa).

Asp-30 provides a ligand contact to (3S)-3-hydroxy-3-methylglutaryl-CoA. The Proton donor/acceptor role is filled by Glu-82. (3S)-3-hydroxy-3-methylglutaryl-CoA is bound by residues Cys-114, Ser-155, Thr-203, and His-236. The active-site Acyl-thioester intermediate is the Cys-114. Residue His-236 is the Proton donor/acceptor of the active site. Residue Arg-241 coordinates CoA. Positions 245, 268, and 298 each coordinate (3S)-3-hydroxy-3-methylglutaryl-CoA.

This sequence belongs to the thiolase-like superfamily. Archaeal HMG-CoA synthase family. Interacts with acetoacetyl-CoA thiolase that catalyzes the precedent step in the pathway and with a DUF35 protein. The acetoacetyl-CoA thiolase/HMG-CoA synthase complex channels the intermediate via a fused CoA-binding site, which allows for efficient coupling of the endergonic thiolase reaction with the exergonic HMGCS reaction.

It catalyses the reaction acetoacetyl-CoA + acetyl-CoA + H2O = (3S)-3-hydroxy-3-methylglutaryl-CoA + CoA + H(+). The protein operates within metabolic intermediate biosynthesis; (R)-mevalonate biosynthesis; (R)-mevalonate from acetyl-CoA: step 2/3. Its function is as follows. Catalyzes the condensation of acetyl-CoA with acetoacetyl-CoA to form 3-hydroxy-3-methylglutaryl-CoA (HMG-CoA). Functions in the mevalonate (MVA) pathway leading to isopentenyl diphosphate (IPP), a key precursor for the biosynthesis of isoprenoid compounds that are building blocks of archaeal membrane lipids. The sequence is that of Hydroxymethylglutaryl-CoA synthase from Pyrobaculum neutrophilum (strain DSM 2338 / JCM 9278 / NBRC 100436 / V24Sta) (Thermoproteus neutrophilus).